The sequence spans 469 residues: Sulfate adenylyltransferase subunit 1 (469 aa).

A tr-type G domain is found at 22–224 (KDLMRFITCG…NMTWYPGSPL (203 aa)). Residues 31 to 38 (GSVDDGKS) form a G1 region. 31 to 38 (GSVDDGKS) serves as a coordination point for GTP. Residues 89-93 (GITID) are G2. Residues 110 to 113 (DTPG) are G3. GTP is bound by residues 110–114 (DTPGH) and 165–168 (NKMD). Residues 165–168 (NKMD) are G4. A G5 region spans residues 202–204 (SAL).

This sequence belongs to the TRAFAC class translation factor GTPase superfamily. Classic translation factor GTPase family. CysN/NodQ subfamily. Heterodimer composed of CysD, the smaller subunit, and CysN.

The enzyme catalyses sulfate + ATP + H(+) = adenosine 5'-phosphosulfate + diphosphate. It participates in sulfur metabolism; hydrogen sulfide biosynthesis; sulfite from sulfate: step 1/3. Functionally, with CysD forms the ATP sulfurylase (ATPS) that catalyzes the adenylation of sulfate producing adenosine 5'-phosphosulfate (APS) and diphosphate, the first enzymatic step in sulfur assimilation pathway. APS synthesis involves the formation of a high-energy phosphoric-sulfuric acid anhydride bond driven by GTP hydrolysis by CysN coupled to ATP hydrolysis by CysD. This is Sulfate adenylyltransferase subunit 1 from Psychromonas ingrahamii (strain DSM 17664 / CCUG 51855 / 37).